The chain runs to 233 residues: Orotidine 5'-phosphate decarboxylase (233 aa).

Residues D11, K34, D61–T70, T117, R179, Q188, G208, and R209 contribute to the substrate site. The active-site Proton donor is the K63.

It belongs to the OMP decarboxylase family. Type 1 subfamily. As to quaternary structure, homodimer.

It carries out the reaction orotidine 5'-phosphate + H(+) = UMP + CO2. It functions in the pathway pyrimidine metabolism; UMP biosynthesis via de novo pathway; UMP from orotate: step 2/2. Its function is as follows. Catalyzes the decarboxylation of orotidine 5'-monophosphate (OMP) to uridine 5'-monophosphate (UMP). The chain is Orotidine 5'-phosphate decarboxylase from Streptococcus pneumoniae (strain Hungary19A-6).